The chain runs to 229 residues: Potassium/proton antiporter CemA (229 aa).

3 helical membrane-spanning segments follow: residues 7–27 (FTPLLYLASIIFLPWWISLSF), 107–127 (ILHFSTNIICFIILSGYSLLG), and 189–209 (IISGLVSTFPVILDTIFKYWI).

Belongs to the CemA family.

It localises to the plastid. It is found in the chloroplast inner membrane. The enzyme catalyses K(+)(in) + H(+)(out) = K(+)(out) + H(+)(in). Contributes to K(+)/H(+) antiport activity by supporting proton efflux to control proton extrusion and homeostasis in chloroplasts in a light-dependent manner to modulate photosynthesis. Prevents excessive induction of non-photochemical quenching (NPQ) under continuous-light conditions. Indirectly promotes efficient inorganic carbon uptake into chloroplasts. The protein is Potassium/proton antiporter CemA of Lactuca sativa (Garden lettuce).